The chain runs to 536 residues: uncharacterized protein (536 aa).

Positions 163 to 394 constitute a Radical SAM core domain; it reads LDAYDSMSVQ…MNFIPTRPLE (232 aa). The [4Fe-4S] cluster site is built by C177, C181, and C184.

It depends on [4Fe-4S] cluster as a cofactor.

This is an uncharacterized protein from Synechocystis sp. (strain ATCC 27184 / PCC 6803 / Kazusa).